A 272-amino-acid polypeptide reads, in one-letter code: Elongation factor Ts (272 aa).

The tract at residues 76 to 79 (TDFV) is involved in Mg(2+) ion dislocation from EF-Tu.

Belongs to the EF-Ts family.

It is found in the cytoplasm. Functionally, associates with the EF-Tu.GDP complex and induces the exchange of GDP to GTP. It remains bound to the aminoacyl-tRNA.EF-Tu.GTP complex up to the GTP hydrolysis stage on the ribosome. The polypeptide is Elongation factor Ts (Corynebacterium urealyticum (strain ATCC 43042 / DSM 7109)).